Consider the following 206-residue polypeptide: dITP/XTP pyrophosphatase (206 aa).

7 to 12 lines the substrate pocket; sequence SNNAKK. Asp-72 acts as the Proton acceptor in catalysis. Asp-72 contacts Mg(2+). Substrate contacts are provided by residues Ser-73, 155–158, Lys-182, and 187–188; these read FGYD and HR.

The protein belongs to the HAM1 NTPase family. As to quaternary structure, homodimer. Mg(2+) is required as a cofactor.

The catalysed reaction is XTP + H2O = XMP + diphosphate + H(+). It carries out the reaction dITP + H2O = dIMP + diphosphate + H(+). The enzyme catalyses ITP + H2O = IMP + diphosphate + H(+). Functionally, pyrophosphatase that catalyzes the hydrolysis of nucleoside triphosphates to their monophosphate derivatives, with a high preference for the non-canonical purine nucleotides XTP (xanthosine triphosphate), dITP (deoxyinosine triphosphate) and ITP. Seems to function as a house-cleaning enzyme that removes non-canonical purine nucleotides from the nucleotide pool, thus preventing their incorporation into DNA/RNA and avoiding chromosomal lesions. The protein is dITP/XTP pyrophosphatase of Corynebacterium glutamicum (strain R).